The chain runs to 155 residues: E3 ubiquitin-protein ligase RHA2A (155 aa).

The segment at 86-128 adopts an RING-type; atypical zinc-finger fold; the sequence is CVVCLSKLKEGEEVRKLECRHVFHKKCLEGWLHQFNFTCPLCR.

Interacts with NAC019 and NAC055. As to expression, expressed in stems, flowers, cauline leaves, rosettes, siliques, seeds and roots.

The protein localises to the cytoplasm. It is found in the nucleus. It catalyses the reaction S-ubiquitinyl-[E2 ubiquitin-conjugating enzyme]-L-cysteine + [acceptor protein]-L-lysine = [E2 ubiquitin-conjugating enzyme]-L-cysteine + N(6)-ubiquitinyl-[acceptor protein]-L-lysine.. The protein operates within protein modification; protein ubiquitination. In terms of biological role, E3 ubiquitin-protein ligase involved in the positive regulation of abscisic acid (ABA) signaling and responses to salt and osmotic stresses during seed germination and early seedling development. Acts additively with RHA2B in regulating ABA signaling and drought response. Possesses E3 ubiquitin ligase activity in vitro. The polypeptide is E3 ubiquitin-protein ligase RHA2A (Arabidopsis thaliana (Mouse-ear cress)).